The chain runs to 123 residues: Large ribosomal subunit protein bL21 (123 aa).

This sequence belongs to the bacterial ribosomal protein bL21 family. As to quaternary structure, part of the 50S ribosomal subunit. Contacts protein L20.

Its function is as follows. This protein binds to 23S rRNA in the presence of protein L20. The polypeptide is Large ribosomal subunit protein bL21 (Rhizobium meliloti (strain 1021) (Ensifer meliloti)).